The following is a 111-amino-acid chain: Probable 4-amino-4-deoxy-L-arabinose-phosphoundecaprenol flippase subunit ArnE (111 aa).

The next 3 helical transmembrane spans lie at 38 to 58, 61 to 81, and 91 to 111; these read LWLGLALICMGAAMVLWLLVL, LPVGIAYPMLSLNFVWVTLAA, and PRHWLGVALIISGIIILGSAA. The EamA domain occupies 40–109; sequence LGLALICMGA…IISGIIILGS (70 aa).

This sequence belongs to the ArnE family. In terms of assembly, heterodimer of ArnE and ArnF.

Its subcellular location is the cell inner membrane. Its pathway is bacterial outer membrane biogenesis; lipopolysaccharide biosynthesis. Its function is as follows. Translocates 4-amino-4-deoxy-L-arabinose-phosphoundecaprenol (alpha-L-Ara4N-phosphoundecaprenol) from the cytoplasmic to the periplasmic side of the inner membrane. The protein is Probable 4-amino-4-deoxy-L-arabinose-phosphoundecaprenol flippase subunit ArnE of Salmonella heidelberg (strain SL476).